Here is a 156-residue protein sequence, read N- to C-terminus: Endoribonuclease YbeY (156 aa).

Zn(2+)-binding residues include His119, His123, and His129.

It belongs to the endoribonuclease YbeY family. Zn(2+) is required as a cofactor.

It is found in the cytoplasm. Functionally, single strand-specific metallo-endoribonuclease involved in late-stage 70S ribosome quality control and in maturation of the 3' terminus of the 16S rRNA. The sequence is that of Endoribonuclease YbeY from Buchnera aphidicola subsp. Cinara cedri (strain Cc).